The primary structure comprises 1192 residues: Homeodomain-interacting protein kinase 3 (1192 aa).

K27 is covalently cross-linked (Glycyl lysine isopeptide (Lys-Gly) (interchain with G-Cter in SUMO); alternate). A Glycyl lysine isopeptide (Lys-Gly) (interchain with G-Cter in SUMO2); alternate cross-link involves residue K27. A Protein kinase domain is found at 197-525; that stretch reads YEVLDFLGRG…PIETLNHPFV (329 aa). ATP-binding positions include 203–211 and K226; that span reads LGRGTFGQV. D322 functions as the Proton acceptor in the catalytic mechanism. At Y359 the chain carries Phosphotyrosine. An interaction with AR region spans residues 767 to 921; sequence QNRSNSLQNT…NSMSDDEQES (155 aa). The segment at 775–868 is interaction with FAS; that stretch reads NTNIPHSAFI…SPRPSLRECK (94 aa). The interval 799-829 is disordered; it reads CVDTQDNHTSEGEAGTCREASVRQDSSVSDK. The interval 832–988 is required for localization to nuclear speckles; it reads QTIIIADSPS…ESGLSVDEHM (157 aa). The interval 843 to 895 is SUMO interaction motifs (SIM); required for nuclear localization and kinase activity; that stretch reads AVSVITISSDSDDEETSPRPSLRECKGSLDCEACQSTLNIDRMCSLSSPDSTL. Residues 847–857 form an interaction with UBL1 region; sequence ITISSDSDDEE. The span at 889 to 906 shows a compositional bias: low complexity; sequence SSPDSTLSTSSSGQSSPS. Disordered regions lie at residues 889–943 and 956–1023; these read SSPD…PFAE and LGTC…KPAA. Residue K1185 forms a Glycyl lysine isopeptide (Lys-Gly) (interchain with G-Cter in SUMO) linkage.

This sequence belongs to the protein kinase superfamily. CMGC Ser/Thr protein kinase family. HIPK subfamily. As to quaternary structure, interacts with UBL1/SUMO-1. Interacts with and stabilizes ligand-bound androgen receptor (AR). Interacts with Nkx1-2. Interacts with FAS and DAXX. Probably part of a complex consisting of HIPK3, FAS and FADD. Binds to NR5A1/SF1, SPEN/MINT and RUNX2. In terms of processing, autophosphorylated, but autophosphorylation is not required for catalytic activity. May be sumoylated. Heart, skeletal muscle, spleen, testis and lung.

It is found in the cytoplasm. The protein resides in the nucleus. It catalyses the reaction L-seryl-[protein] + ATP = O-phospho-L-seryl-[protein] + ADP + H(+). It carries out the reaction L-threonyl-[protein] + ATP = O-phospho-L-threonyl-[protein] + ADP + H(+). Serine/threonine-protein kinase involved in transcription regulation, apoptosis and steroidogenic gene expression. Phosphorylates JUN and RUNX2. Seems to negatively regulate apoptosis by promoting FADD phosphorylation. Enhances androgen receptor-mediated transcription. May act as a transcriptional corepressor for NK homeodomain transcription factors. The phosphorylation of NR5A1 activates SF1 leading to increased steroidogenic gene expression upon cAMP signaling pathway stimulation. In osteoblasts, supports transcription activation: phosphorylates RUNX2 that synergizes with SPEN/MINT to enhance FGFR2-mediated activation of the osteocalcin FGF-responsive element (OCFRE). This is Homeodomain-interacting protein kinase 3 (Hipk3) from Mus musculus (Mouse).